Reading from the N-terminus, the 318-residue chain is MAAHCRGTELDLSWISKVQVNHAAVLRRAQQIQARRSVKKEWQAAWLLKAVTFIDLTTLSGDDTFSNVQRLCYKAKYPIRADLLKALNMDDKGITTAAVCVYPARVCDAVKALKAAGCSIPVASVATGFPAGQTHLKTRLEEIRLAVEDGATEIDVVINRTLVLTGQWEALYDEVTQFRKACGEAHLKTILATGELGSLTNVYKASLVAMMAGSDFIKTSTGKETVNATFPVAIVMLRAIRDFFWKTGNKVGFKPAGGIRTAKESLAWLSLVKEELGDEWLTPDLFRIGASSLLSDIERQIYHHVTGRYAAYHDLPMS.

Catalysis depends on D155, which acts as the Proton donor/acceptor. The Schiff-base intermediate with acetaldehyde role is filled by K218. Residue K254 is the Proton donor/acceptor of the active site.

The protein belongs to the DeoC/FbaB aldolase family. DeoC type 2 subfamily. Interacts with YBX1.

It is found in the cytoplasm. Its subcellular location is the cytoplasmic granule. It localises to the nucleus. It carries out the reaction 2-deoxy-D-ribose 5-phosphate = D-glyceraldehyde 3-phosphate + acetaldehyde. It functions in the pathway carbohydrate degradation; 2-deoxy-D-ribose 1-phosphate degradation; D-glyceraldehyde 3-phosphate and acetaldehyde from 2-deoxy-alpha-D-ribose 1-phosphate: step 2/2. In terms of biological role, catalyzes a reversible aldol reaction between acetaldehyde and D-glyceraldehyde 3-phosphate to generate 2-deoxy-D-ribose 5-phosphate. Participates in stress granule (SG) assembly. May allow ATP production from extracellular deoxyinosine in conditions of energy deprivation. In Mus musculus (Mouse), this protein is Deoxyribose-phosphate aldolase (Dera).